A 405-amino-acid chain; its full sequence is Phosphopentomutase (405 aa).

Mn(2+)-binding residues include Asp10, Asp303, His308, Asp344, His345, and His356.

The protein belongs to the phosphopentomutase family. Requires Mn(2+) as cofactor.

The protein localises to the cytoplasm. The enzyme catalyses 2-deoxy-alpha-D-ribose 1-phosphate = 2-deoxy-D-ribose 5-phosphate. It catalyses the reaction alpha-D-ribose 1-phosphate = D-ribose 5-phosphate. Its pathway is carbohydrate degradation; 2-deoxy-D-ribose 1-phosphate degradation; D-glyceraldehyde 3-phosphate and acetaldehyde from 2-deoxy-alpha-D-ribose 1-phosphate: step 1/2. Its function is as follows. Isomerase that catalyzes the conversion of deoxy-ribose 1-phosphate (dRib-1-P) and ribose 1-phosphate (Rib-1-P) to deoxy-ribose 5-phosphate (dRib-5-P) and ribose 5-phosphate (Rib-5-P), respectively. The protein is Phosphopentomutase of Shewanella denitrificans (strain OS217 / ATCC BAA-1090 / DSM 15013).